A 612-amino-acid polypeptide reads, in one-letter code: Elongation factor 4 (612 aa).

The tr-type G domain maps to 11–193; sequence KHIRNFSIVA…EIVKKVPAPN (183 aa). GTP contacts are provided by residues 23–28 and 140–143; these read DHGKST and NKID.

It belongs to the TRAFAC class translation factor GTPase superfamily. Classic translation factor GTPase family. LepA subfamily.

It localises to the cell membrane. It carries out the reaction GTP + H2O = GDP + phosphate + H(+). Its function is as follows. Required for accurate and efficient protein synthesis under certain stress conditions. May act as a fidelity factor of the translation reaction, by catalyzing a one-codon backward translocation of tRNAs on improperly translocated ribosomes. Back-translocation proceeds from a post-translocation (POST) complex to a pre-translocation (PRE) complex, thus giving elongation factor G a second chance to translocate the tRNAs correctly. Binds to ribosomes in a GTP-dependent manner. This chain is Elongation factor 4, found in Lactobacillus gasseri (strain ATCC 33323 / DSM 20243 / BCRC 14619 / CIP 102991 / JCM 1131 / KCTC 3163 / NCIMB 11718 / NCTC 13722 / AM63).